The following is a 451-amino-acid chain: Glucose-6-phosphate isomerase (451 aa).

The active-site Proton donor is E291. Catalysis depends on residues H312 and K426.

This sequence belongs to the GPI family.

Its subcellular location is the cytoplasm. The catalysed reaction is alpha-D-glucose 6-phosphate = beta-D-fructose 6-phosphate. The protein operates within carbohydrate biosynthesis; gluconeogenesis. It participates in carbohydrate degradation; glycolysis; D-glyceraldehyde 3-phosphate and glycerone phosphate from D-glucose: step 2/4. Functionally, catalyzes the reversible isomerization of glucose-6-phosphate to fructose-6-phosphate. This chain is Glucose-6-phosphate isomerase, found in Caldanaerobacter subterraneus subsp. tengcongensis (strain DSM 15242 / JCM 11007 / NBRC 100824 / MB4) (Thermoanaerobacter tengcongensis).